Consider the following 136-residue polypeptide: Large ribosomal subunit protein eL27 (136 aa).

The 32-residue stretch at 5 to 36 (MKPGKVVLVLRGKYAGRKAVVVKQQDEGVSDR) folds into the KOW domain.

The protein belongs to the eukaryotic ribosomal protein eL27 family. In terms of assembly, component of the large ribosomal subunit.

Its subcellular location is the cytoplasm. The protein localises to the cytosol. It localises to the rough endoplasmic reticulum. In terms of biological role, component of the large ribosomal subunit. This chain is Large ribosomal subunit protein eL27 (rpl-27), found in Caenorhabditis elegans.